Consider the following 97-residue polypeptide: Large ribosomal subunit protein uL23 (97 aa).

This sequence belongs to the universal ribosomal protein uL23 family. In terms of assembly, part of the 50S ribosomal subunit. Contacts protein L29, and trigger factor when it is bound to the ribosome.

One of the early assembly proteins it binds 23S rRNA. One of the proteins that surrounds the polypeptide exit tunnel on the outside of the ribosome. Forms the main docking site for trigger factor binding to the ribosome. The protein is Large ribosomal subunit protein uL23 of Sinorhizobium fredii (strain NBRC 101917 / NGR234).